A 284-amino-acid polypeptide reads, in one-letter code: uncharacterized protein (284 aa).

A helical transmembrane segment spans residues 12–32 (ILFILFVVAFCVYLVPRVAIN).

The protein belongs to the serine esterase family.

The protein resides in the membrane. This is an uncharacterized protein from Escherichia coli O157:H7.